The chain runs to 594 residues: Apolipoprotein N-acyltransferase (594 aa).

The segment covering 1 to 29 has biased composition (acidic residues); the sequence is MIPAVTDDDPLEDPLDDDVAPGLDDAEPE. Residues 1 to 48 are disordered; the sequence is MIPAVTDDDPLEDPLDDDVAPGLDDAEPEPEPRDEHDEPSRPATGSRI. Residues 1–67 are Cytoplasmic-facing; that stretch reads MIPAVTDDDP…RFGKGVLDRC (67 aa). Residues 30–40 show a composition bias toward basic and acidic residues; the sequence is PEPRDEHDEPS. A helical transmembrane segment spans residues 68-87; it reads APLSAAIGGGLALWLSFPPI. The Extracellular portion of the chain corresponds to 88 to 116; sequence GWWFTAFPGLALLGWVLTRTATTKAGGFG. A helical transmembrane segment spans residues 117–134; the sequence is YGVLFGLAFYVPLLPWIS. Residues 135 to 138 lie on the Cytoplasmic side of the membrane; sequence GLVG. A helical transmembrane segment spans residues 139–160; that stretch reads AVPWLALAFAESLFCGLFGLGA. Topologically, residues 161 to 221 are extracellular; it reads VVVVRLPGWP…IGGAPLVSFA (61 aa). Residues 222–239 traverse the membrane as a helical segment; the sequence is VALIGFSLTLLTAQIVWW. Over 240–251 the chain is Cytoplasmic; that stretch reads WRHGHKPGVPAP. The chain crosses the membrane as a helical span at residues 252–269; sequence AVMLPGVAIAASLLVTAL. Residues 270–554 are Extracellular-facing; it reads VWPQVRQSGT…TDLTPATKWG (285 aa). One can recognise a CN hydrolase domain in the interval 287-543; it reads VTVAAVQGNV…PAYLDNQIRL (257 aa). E340 acts as the Proton acceptor in catalysis. K405 is a catalytic residue. The active-site Nucleophile is the C455. Residues 555–572 form a helical membrane-spanning segment; that stretch reads PIVQAVLVIAGVAVLLIA. Over 573 to 594 the chain is Cytoplasmic; that stretch reads ILHNGRFAPRMLRRRSATTVKR.

This sequence belongs to the CN hydrolase family. Apolipoprotein N-acyltransferase subfamily. Interacts with Ppm1 (AC A0QZ12) upon coexpression in E.coli, which increases the PPM synthase activity of Ppm1.

The protein localises to the cell membrane. It carries out the reaction N-terminal S-1,2-diacyl-sn-glyceryl-L-cysteinyl-[lipoprotein] + a glycerophospholipid = N-acyl-S-1,2-diacyl-sn-glyceryl-L-cysteinyl-[lipoprotein] + a 2-acyl-sn-glycero-3-phospholipid + H(+). It functions in the pathway protein modification; lipoprotein biosynthesis (N-acyl transfer). Its function is as follows. Catalyzes the phospholipid dependent N-acylation of the N-terminal cysteine of apolipoprotein, the last step in lipoprotein maturation. Can transfer a number of fatty acids (C16 and C19, palmitic and probably tuberculostearic acids respectively are shown). Enhances the polyprenol monophosphomannose (PPM) synthase activity of Ppm1 (AC A0QZ12) without itself having PPM synthase catalytic activity. This is Apolipoprotein N-acyltransferase from Mycolicibacterium smegmatis (strain ATCC 700084 / mc(2)155) (Mycobacterium smegmatis).